The chain runs to 49 residues: Photosystem I reaction center subunit IX (49 aa).

A helical membrane pass occupies residues F14–I34.

The protein belongs to the PsaJ family.

The protein localises to the cellular thylakoid membrane. Functionally, may help in the organization of the PsaE and PsaF subunits. In Nostoc punctiforme (strain ATCC 29133 / PCC 73102), this protein is Photosystem I reaction center subunit IX.